The sequence spans 713 residues: Polyribonucleotide nucleotidyltransferase (713 aa).

2 residues coordinate Mg(2+): D493 and D499. The KH domain maps to 560 to 619 (PRMITIKINPEKIRDVIGKGGSVIRALTEETGTTIDISDDGVVTIASTNSEGMAEAKKRI). Residues 629-697 (GHVYEGTVLK…EKGRVRLSAK (69 aa)) enclose the S1 motif domain.

This sequence belongs to the polyribonucleotide nucleotidyltransferase family. Mg(2+) serves as cofactor.

Its subcellular location is the cytoplasm. It catalyses the reaction RNA(n+1) + phosphate = RNA(n) + a ribonucleoside 5'-diphosphate. In terms of biological role, involved in mRNA degradation. Catalyzes the phosphorolysis of single-stranded polyribonucleotides processively in the 3'- to 5'-direction. The polypeptide is Polyribonucleotide nucleotidyltransferase (Burkholderia mallei (strain NCTC 10247)).